The sequence spans 182 residues: ATP-dependent protease subunit HslV (182 aa).

T12 is a catalytic residue. Na(+) contacts are provided by G167, C170, and T173.

It belongs to the peptidase T1B family. HslV subfamily. In terms of assembly, a double ring-shaped homohexamer of HslV is capped on each side by a ring-shaped HslU homohexamer. The assembly of the HslU/HslV complex is dependent on binding of ATP.

It is found in the cytoplasm. It catalyses the reaction ATP-dependent cleavage of peptide bonds with broad specificity.. With respect to regulation, allosterically activated by HslU binding. In terms of biological role, protease subunit of a proteasome-like degradation complex believed to be a general protein degrading machinery. The chain is ATP-dependent protease subunit HslV from Acidiphilium cryptum (strain JF-5).